A 307-amino-acid chain; its full sequence is Thymidylate synthase (307 aa).

Residues Arg26 and 160–161 contribute to the dUMP site; that span reads RR. Catalysis depends on Cys180, which acts as the Nucleophile. Residues 209–212, Asn220, and 250–252 each bind dUMP; these read RSCD and HIY. Asp212 provides a ligand contact to (6R)-5,10-methylene-5,6,7,8-tetrahydrofolate. A (6R)-5,10-methylene-5,6,7,8-tetrahydrofolate-binding site is contributed by Ala306.

This sequence belongs to the thymidylate synthase family. Bacterial-type ThyA subfamily. In terms of assembly, homodimer.

It localises to the cytoplasm. It carries out the reaction dUMP + (6R)-5,10-methylene-5,6,7,8-tetrahydrofolate = 7,8-dihydrofolate + dTMP. It participates in pyrimidine metabolism; dTTP biosynthesis. In terms of biological role, catalyzes the reductive methylation of 2'-deoxyuridine-5'-monophosphate (dUMP) to 2'-deoxythymidine-5'-monophosphate (dTMP) while utilizing 5,10-methylenetetrahydrofolate (mTHF) as the methyl donor and reductant in the reaction, yielding dihydrofolate (DHF) as a by-product. This enzymatic reaction provides an intracellular de novo source of dTMP, an essential precursor for DNA biosynthesis. The polypeptide is Thymidylate synthase (Rhizobium rhizogenes (strain K84 / ATCC BAA-868) (Agrobacterium radiobacter)).